A 201-amino-acid chain; its full sequence is CASP-like protein 1F2 (201 aa).

At Met1–Arg29 the chain is on the cytoplasmic side. Residues Ile30 to Ile50 form a helical membrane-spanning segment. The Extracellular portion of the chain corresponds to Ser51–Arg78. The helical transmembrane segment at Phe79 to Cys99 threads the bilayer. At Leu100–Asp119 the chain is on the cytoplasmic side. Residues Met120–Gly140 form a helical membrane-spanning segment. At Arg141–Gln162 the chain is on the extracellular side. The chain crosses the membrane as a helical span at residues Ala163–Leu183. The Cytoplasmic portion of the chain corresponds to Ala184–Glu201.

The protein belongs to the Casparian strip membrane proteins (CASP) family. Homodimer and heterodimers.

The protein localises to the cell membrane. The sequence is that of CASP-like protein 1F2 from Ricinus communis (Castor bean).